Here is a 416-residue protein sequence, read N- to C-terminus: Multifunctional CCA protein (416 aa).

G8 and R11 together coordinate ATP. The CTP site is built by G8 and R11. Mg(2+)-binding residues include D21 and D23. The ATP site is built by R91, R137, and R140. Residues R91, R137, and R140 each contribute to the CTP site. Positions T228–W329 constitute an HD domain.

This sequence belongs to the tRNA nucleotidyltransferase/poly(A) polymerase family. Bacterial CCA-adding enzyme type 1 subfamily. As to quaternary structure, monomer. Can also form homodimers and oligomers. Requires Mg(2+) as cofactor. Ni(2+) is required as a cofactor.

It carries out the reaction a tRNA precursor + 2 CTP + ATP = a tRNA with a 3' CCA end + 3 diphosphate. The enzyme catalyses a tRNA with a 3' CCA end + 2 CTP + ATP = a tRNA with a 3' CCACCA end + 3 diphosphate. Its function is as follows. Catalyzes the addition and repair of the essential 3'-terminal CCA sequence in tRNAs without using a nucleic acid template. Adds these three nucleotides in the order of C, C, and A to the tRNA nucleotide-73, using CTP and ATP as substrates and producing inorganic pyrophosphate. tRNA 3'-terminal CCA addition is required both for tRNA processing and repair. Also involved in tRNA surveillance by mediating tandem CCA addition to generate a CCACCA at the 3' terminus of unstable tRNAs. While stable tRNAs receive only 3'-terminal CCA, unstable tRNAs are marked with CCACCA and rapidly degraded. This Shewanella sp. (strain MR-7) protein is Multifunctional CCA protein.